A 231-amino-acid polypeptide reads, in one-letter code: Uracil-DNA glycosylase (231 aa).

D74 functions as the Proton acceptor in the catalytic mechanism.

The protein belongs to the uracil-DNA glycosylase (UDG) superfamily. UNG family.

The protein resides in the cytoplasm. It carries out the reaction Hydrolyzes single-stranded DNA or mismatched double-stranded DNA and polynucleotides, releasing free uracil.. Excises uracil residues from the DNA which can arise as a result of misincorporation of dUMP residues by DNA polymerase or due to deamination of cytosine. The sequence is that of Uracil-DNA glycosylase from Campylobacter jejuni (strain RM1221).